Reading from the N-terminus, the 219-residue chain is uncharacterized protein (219 aa).

An N-terminal signal peptide occupies residues 1–17 (MFKKIIILFLGIFLLSS). A lipid anchor (N-palmitoyl cysteine) is attached at Cys-18. Cys-18 carries the S-diacylglycerol cysteine lipid modification. Positions 110–136 (KAESNATQSNNDMTLSKANKKVRKDDS) are disordered. The segment covering 112–126 (ESNATQSNNDMTLSK) has biased composition (polar residues). Positions 137-165 (YKEKKIEEELNQIKAMLRETKRDITKYTC) form a coiled coil.

The protein localises to the cell membrane. This is an uncharacterized protein from Rickettsia prowazekii (strain Madrid E).